An 80-amino-acid polypeptide reads, in one-letter code: Myrmicitoxin(1)-Pr1a (80 aa).

An N-terminal signal peptide occupies residues 1–23 (MEIPKLLYIAVIAIGLSGSLTWA). Residues 24 to 57 (TPLANPLAEAEAEAKATAEATAEALAEALAEPEP) constitute a propeptide that is removed on maturation. The residue at position 79 (Phe79) is a Phenylalanine amide.

It belongs to the formicidae venom clade 1 family. In terms of tissue distribution, expressed by the venom gland.

Its subcellular location is the secreted. Functionally, vertebrate-selective toxin that causes pain by targeting voltage-gated sodium channels. The protein is Myrmicitoxin(1)-Pr1a of Pogonomyrmex rugosus (Desert harvester ant).